The sequence spans 225 residues: 2-C-methyl-D-erythritol 4-phosphate cytidylyltransferase (225 aa).

It belongs to the IspD/TarI cytidylyltransferase family. IspD subfamily.

The catalysed reaction is 2-C-methyl-D-erythritol 4-phosphate + CTP + H(+) = 4-CDP-2-C-methyl-D-erythritol + diphosphate. The protein operates within isoprenoid biosynthesis; isopentenyl diphosphate biosynthesis via DXP pathway; isopentenyl diphosphate from 1-deoxy-D-xylulose 5-phosphate: step 2/6. Its function is as follows. Catalyzes the formation of 4-diphosphocytidyl-2-C-methyl-D-erythritol from CTP and 2-C-methyl-D-erythritol 4-phosphate (MEP). The polypeptide is 2-C-methyl-D-erythritol 4-phosphate cytidylyltransferase (Haemophilus influenzae (strain 86-028NP)).